We begin with the raw amino-acid sequence, 853 residues long: DNA mismatch repair protein MutS (853 aa).

Residue 614–621 (GPNMGGKS) coordinates ATP.

The protein belongs to the DNA mismatch repair MutS family.

In terms of biological role, this protein is involved in the repair of mismatches in DNA. It is possible that it carries out the mismatch recognition step. This protein has a weak ATPase activity. The chain is DNA mismatch repair protein MutS from Escherichia coli (strain SE11).